Consider the following 218-residue polypeptide: UPF0598 protein C8orf82 homolog (218 aa).

This sequence belongs to the UPF0598 family.

The polypeptide is UPF0598 protein C8orf82 homolog (Rattus norvegicus (Rat)).